Reading from the N-terminus, the 68-residue chain is Large ribosomal subunit protein uL29 (68 aa).

This sequence belongs to the universal ribosomal protein uL29 family.

The polypeptide is Large ribosomal subunit protein uL29 (rpl29) (Pyrococcus abyssi (strain GE5 / Orsay)).